The sequence spans 471 residues: MKIKTRFAPSPTGYLHVGGARTALYSWLFARHHGGEFVLRIEDTDLERSTPEAIEAIMDGMNWLNLEWDEGPYFQTKRFERYNAVIDEMLEAGTAYKCYCSKERLEQLREEQMAKGEKPRYDGRCRHSYEHHADDEPCVVRFANPQDGSVIFDDQIRGPIEFSNQELDDLIIRRTDGSPTYNFCVVVDDWDMEITHVIRGEDHINNTPRQINILKALNAPVPMYAHVSMINGDDGKKLSKRHGAVSVMQYRDDGYLPEALLNYLVRLGWSSGDQEIFTREEMIKLFSLGAVSKSASAFNTDKLLWLNHHYINTLAPEYVATHLQWHIEQENIDTRNGPQLAELVKLLGERCKTLKEMAQSCRYFYEDFSEFDADAAKKHLRPVARQPLEVVRDKLSAITDWSAENVHHAIQATADELEVGMGKVGMPLRVAVTGAGQSPALDVTVHAIGKTRSIERINKALGFIAERESQQ.

The short motif at 9 to 19 is the 'HIGH' region element; it reads PSPTGYLHVGG. Residues Cys98, Cys100, Cys125, and His127 each coordinate Zn(2+). The short motif at 237-241 is the 'KMSKS' region element; the sequence is KLSKR. Lys240 lines the ATP pocket.

Belongs to the class-I aminoacyl-tRNA synthetase family. Glutamate--tRNA ligase type 1 subfamily. As to quaternary structure, monomer. Requires Zn(2+) as cofactor.

The protein localises to the cytoplasm. It carries out the reaction tRNA(Glu) + L-glutamate + ATP = L-glutamyl-tRNA(Glu) + AMP + diphosphate. Functionally, catalyzes the attachment of glutamate to tRNA(Glu) in a two-step reaction: glutamate is first activated by ATP to form Glu-AMP and then transferred to the acceptor end of tRNA(Glu). In Salmonella dublin (strain CT_02021853), this protein is Glutamate--tRNA ligase.